Here is a 377-residue protein sequence, read N- to C-terminus: Ribosomal RNA large subunit methyltransferase G (377 aa).

Belongs to the methyltransferase superfamily. RlmG family.

It localises to the cytoplasm. The catalysed reaction is guanosine(1835) in 23S rRNA + S-adenosyl-L-methionine = N(2)-methylguanosine(1835) in 23S rRNA + S-adenosyl-L-homocysteine + H(+). Its function is as follows. Specifically methylates the guanine in position 1835 (m2G1835) of 23S rRNA. The protein is Ribosomal RNA large subunit methyltransferase G of Streptomyces coelicolor (strain ATCC BAA-471 / A3(2) / M145).